The following is a 237-amino-acid chain: 2-C-methyl-D-erythritol 4-phosphate cytidylyltransferase (237 aa).

The protein belongs to the IspD/TarI cytidylyltransferase family. IspD subfamily.

It carries out the reaction 2-C-methyl-D-erythritol 4-phosphate + CTP + H(+) = 4-CDP-2-C-methyl-D-erythritol + diphosphate. The protein operates within isoprenoid biosynthesis; isopentenyl diphosphate biosynthesis via DXP pathway; isopentenyl diphosphate from 1-deoxy-D-xylulose 5-phosphate: step 2/6. Functionally, catalyzes the formation of 4-diphosphocytidyl-2-C-methyl-D-erythritol from CTP and 2-C-methyl-D-erythritol 4-phosphate (MEP). The polypeptide is 2-C-methyl-D-erythritol 4-phosphate cytidylyltransferase (Acaryochloris marina (strain MBIC 11017)).